A 151-amino-acid chain; its full sequence is MRVWVDADACPNMIKEVLFRAAQRRKVQVTLVANQPLKVIPSPFIKAIQVSAGFDVADNYIVEQVEAGDLIITADIPLAAEAIEKGGLVISPRGELLTAENIRPRLNMRDFLEQMRSSGEHTGGPAALTANDKQAFANALDRLITKGLKDS.

Belongs to the UPF0178 family.

This Saccharophagus degradans (strain 2-40 / ATCC 43961 / DSM 17024) protein is UPF0178 protein Sde_3033.